Here is a 120-residue protein sequence, read N- to C-terminus: Large ribosomal subunit protein uL18 (120 aa).

The protein belongs to the universal ribosomal protein uL18 family. Part of the 50S ribosomal subunit; part of the 5S rRNA/L5/L18/L25 subcomplex. Contacts the 5S and 23S rRNAs.

In terms of biological role, this is one of the proteins that bind and probably mediate the attachment of the 5S RNA into the large ribosomal subunit, where it forms part of the central protuberance. In Nitrobacter winogradskyi (strain ATCC 25391 / DSM 10237 / CIP 104748 / NCIMB 11846 / Nb-255), this protein is Large ribosomal subunit protein uL18.